Consider the following 536-residue polypeptide: Solute carrier family 2, facilitated glucose transporter member 10 (536 aa).

Residues 1 to 15 (MGLRPAVLLLCASVS) lie on the Cytoplasmic side of the membrane. A helical transmembrane segment spans residues 16–36 (LLGGLTFGYELAVISGALLPL). The Extracellular segment spans residues 37–48 (QLNFGLSCLEQE). The helical transmembrane segment at 49–69 (LLVGSLLLGALLASLVGGFLI) threads the bilayer. Residues 70–82 (DCYGRRRAILGSN) lie on the Cytoplasmic side of the membrane. A helical transmembrane segment spans residues 83–103 (AVLLAGSLILGLASSLPWLLL). The Extracellular portion of the chain corresponds to 104-107 (GRLS). A helical membrane pass occupies residues 108-128 (VGFAISLSSMACCIYVSELVG). The Cytoplasmic portion of the chain corresponds to 129–132 (PRQR). Residues 133–153 (GVLVSLYEVGITVGILFSYGL) form a helical membrane-spanning segment. Residues 154–166 (NYVLAGSPWGWRH) are Extracellular-facing. The chain crosses the membrane as a helical span at residues 167-187 (MFGWAAAPALLQSLSLFLLPA). Over 188-232 (GAEGTAAPKDLIPLQGRETSKPGLVKPQYSFLDLFRAQDGMWSRT) the chain is Cytoplasmic. Residues 233–253 (VVGLGLVLFQQLTGQPNVLYY) form a helical membrane-spanning segment. Residue 242 to 243 (QQ) participates in D-glucose binding. At 254-269 (ASTIFRSVGFHGGSSA) the chain is on the extracellular side. The chain crosses the membrane as a helical span at residues 270 to 290 (VLASVGLGTVKVAATLVATGL). Over 291–298 (VDRAGRRV) the chain is Cytoplasmic. A helical membrane pass occupies residues 299–319 (LLLFGCALMALSVSGIGLVSF). Over 320–402 (AVSLDSGPSC…VPTSPILEHT (83 aa)) the chain is Extracellular. Residues 403–423 (LLCWSALVCMMVYVSAFSVGF) traverse the membrane as a helical segment. Residues 424–442 (GPVTWLVLSEIYPAEIRGR) are Cytoplasmic-facing. Residue tryptophan 428 participates in D-glucose binding. The helical transmembrane segment at 443 to 463 (AFAFCSSFNWAANLFISLSFL) threads the bilayer. The Extracellular portion of the chain corresponds to 464-468 (DLIGA). Residues 469 to 489 (IGLAWTFLLYGLTAVLGLAFI) traverse the membrane as a helical segment. Topologically, residues 490–536 (YLLVPETKGQSLAEIEQQFQTSRFPLNFGHRQRIGIQYHRLDVSSAS) are cytoplasmic.

Belongs to the major facilitator superfamily. Sugar transporter (TC 2.A.1.1) family. Glucose transporter subfamily.

Its subcellular location is the endomembrane system. The protein resides in the cytoplasm. The protein localises to the perinuclear region. It carries out the reaction D-glucose(out) = D-glucose(in). Functionally, facilitative glucose transporter required for the development of the cardiovascular system. This is Solute carrier family 2, facilitated glucose transporter member 10 from Mus musculus (Mouse).